The sequence spans 324 residues: 33 kDa ribonucleoprotein, chloroplastic (324 aa).

A chloroplast-targeting transit peptide spans 1-71 (MSGCCFSFAA…YRSSIFLSTC (71 aa)). 2 RRM domains span residues 114–192 (GRLY…FPEV) and 217–296 (HKLY…AGQK). Positions 294 to 324 (GQKAPVSSPPVVETSPENDSDNSELLSSLSS) are disordered. Residues 298–308 (PVSSPPVVETS) are compositionally biased toward low complexity.

It is found in the plastid. The protein localises to the chloroplast. In terms of biological role, could be involved in splicing and/or processing of chloroplast RNA's. The sequence is that of 33 kDa ribonucleoprotein, chloroplastic from Nicotiana sylvestris (Wood tobacco).